We begin with the raw amino-acid sequence, 142 residues long: Large ribosomal subunit protein uL13 (142 aa).

Belongs to the universal ribosomal protein uL13 family. As to quaternary structure, part of the 50S ribosomal subunit.

In terms of biological role, this protein is one of the early assembly proteins of the 50S ribosomal subunit, although it is not seen to bind rRNA by itself. It is important during the early stages of 50S assembly. The chain is Large ribosomal subunit protein uL13 from Polynucleobacter asymbioticus (strain DSM 18221 / CIP 109841 / QLW-P1DMWA-1) (Polynucleobacter necessarius subsp. asymbioticus).